Here is a 476-residue protein sequence, read N- to C-terminus: Eukaryotic translation initiation factor 3 subunit L (476 aa).

Residues 257–452 enclose the PCI domain; it reads DAIRMFSHIL…DLDYALENDL (196 aa).

It belongs to the eIF-3 subunit L family. As to quaternary structure, component of the eukaryotic translation initiation factor 3 (eIF-3) complex.

It is found in the cytoplasm. In terms of biological role, component of the eukaryotic translation initiation factor 3 (eIF-3) complex, which is involved in protein synthesis of a specialized repertoire of mRNAs and, together with other initiation factors, stimulates binding of mRNA and methionyl-tRNAi to the 40S ribosome. The eIF-3 complex specifically targets and initiates translation of a subset of mRNAs involved in cell proliferation. The sequence is that of Eukaryotic translation initiation factor 3 subunit L from Neosartorya fischeri (strain ATCC 1020 / DSM 3700 / CBS 544.65 / FGSC A1164 / JCM 1740 / NRRL 181 / WB 181) (Aspergillus fischerianus).